The primary structure comprises 214 residues: Uracil phosphoribosyltransferase (214 aa).

5-phospho-alpha-D-ribose 1-diphosphate-binding positions include R107 and 135–143 (DPMLATGKT). Uracil contacts are provided by residues I198 and 203–205 (GDA). Residue D204 coordinates 5-phospho-alpha-D-ribose 1-diphosphate.

Belongs to the UPRTase family. It depends on Mg(2+) as a cofactor.

The enzyme catalyses UMP + diphosphate = 5-phospho-alpha-D-ribose 1-diphosphate + uracil. The protein operates within pyrimidine metabolism; UMP biosynthesis via salvage pathway; UMP from uracil: step 1/1. Allosterically activated by GTP. Functionally, catalyzes the conversion of uracil and 5-phospho-alpha-D-ribose 1-diphosphate (PRPP) to UMP and diphosphate. This is Uracil phosphoribosyltransferase from Aeropyrum pernix (strain ATCC 700893 / DSM 11879 / JCM 9820 / NBRC 100138 / K1).